The following is a 136-amino-acid chain: Large ribosomal subunit protein uL16 (136 aa).

The protein belongs to the universal ribosomal protein uL16 family. As to quaternary structure, part of the 50S ribosomal subunit.

In terms of biological role, binds 23S rRNA and is also seen to make contacts with the A and possibly P site tRNAs. The sequence is that of Large ribosomal subunit protein uL16 from Rickettsia bellii (strain OSU 85-389).